The sequence spans 137 residues: MKGIDNTAYSYIDDLTCCTRVIMADYLNSDYRYNKDVDLDLVKLFLENGKPHGIMCSIVPLWRNDKETIFLILKTMNSDVLQHILIEYMTFGDIPLVEYGTVVNKEAIHEYFRNINIDSYTMKYLLKKEGRCHQLSR.

This is an uncharacterized protein from Bos taurus (Bovine).